The chain runs to 2655 residues: Probable polyketide synthase 42 (2655 aa).

Residues 16–445 enclose the Ketosynthase family 3 (KS3) domain; sequence QNGVAVIGVG…GSNCCIILSE (430 aa). Residues Cys-186, His-325, and His-368 each act as for beta-ketoacyl synthase activity in the active site. Residues 634-667 are acyl/malonyl transferase; sequence GIKSDIMVGHSFGEIACSYCSGMVDFKTLCYLTY. Ser-644 functions as the For acyl/malonyl transferase activity in the catalytic mechanism. The tract at residues 926-1059 is N-terminal hotdog fold; it reads HPTWKKANKN…ANYSLFKHND (134 aa). The PKS/mFAS DH domain maps to 926-1234; it reads HPTWKKANKN…CKSSIPIIDS (309 aa). Residue His-970 is the Proton acceptor; for dehydratase activity of the active site. The tract at residues 1074 to 1234 is C-terminal hotdog fold; that stretch reads NYTIISKDEL…CKSSIPIIDS (161 aa). The active-site Proton donor; for dehydratase activity is the Asp-1146. Residues 1700–1719 are disordered; that stretch reads YNNNNNNNNNNNNNNNNNNN. In terms of domain architecture, Carrier spans 2517-2594; the sequence is NENNNIGDLL…TTIEIIIKGY (78 aa). An O-(pantetheine 4'-phosphoryl)serine modification is found at Ser-2554. Positions 2612–2655 are disordered; sequence SVVQKETIKDNNENKDDIKIDMDDKKENLKGKKENIDDKKENNN. Residues 2617–2655 are compositionally biased toward basic and acidic residues; it reads ETIKDNNENKDDIKIDMDDKKENLKGKKENIDDKKENNN. The stretch at 2618–2655 forms a coiled coil; the sequence is TIKDNNENKDDIKIDMDDKKENLKGKKENIDDKKENNN.

It depends on pantetheine 4'-phosphate as a cofactor.

Functionally, probable polyketide synthase. This Dictyostelium discoideum (Social amoeba) protein is Probable polyketide synthase 42 (pks42).